The primary structure comprises 660 residues: Threonine--tRNA ligase (660 aa).

In terms of domain architecture, TGS spans 1-49 (MPDSIVHVKKGQRFLDVIKDKNVVAVKIDSVLHDLRDVAERDVDAIPVS). Residues 225–554 (DHRRIIAEMD…LLEHYAGKLP (330 aa)) are catalytic. Residues Cys-318, His-369, and His-531 each contribute to the Zn(2+) site.

The protein belongs to the class-II aminoacyl-tRNA synthetase family. As to quaternary structure, homodimer. It depends on Zn(2+) as a cofactor.

It is found in the cytoplasm. It carries out the reaction tRNA(Thr) + L-threonine + ATP = L-threonyl-tRNA(Thr) + AMP + diphosphate + H(+). Its function is as follows. Catalyzes the attachment of threonine to tRNA(Thr) in a two-step reaction: L-threonine is first activated by ATP to form Thr-AMP and then transferred to the acceptor end of tRNA(Thr). This chain is Threonine--tRNA ligase, found in Thermoplasma acidophilum (strain ATCC 25905 / DSM 1728 / JCM 9062 / NBRC 15155 / AMRC-C165).